The chain runs to 236 residues: 7-cyano-7-deazaguanine synthase (236 aa).

7-17 is a binding site for ATP; it reads CSGGLDSVTLA. Cys185, Cys193, Cys196, and Cys199 together coordinate Zn(2+).

Belongs to the QueC family. Zn(2+) serves as cofactor.

The catalysed reaction is 7-carboxy-7-deazaguanine + NH4(+) + ATP = 7-cyano-7-deazaguanine + ADP + phosphate + H2O + H(+). It participates in purine metabolism; 7-cyano-7-deazaguanine biosynthesis. Functionally, catalyzes the ATP-dependent conversion of 7-carboxy-7-deazaguanine (CDG) to 7-cyano-7-deazaguanine (preQ(0)). In Rhizobium johnstonii (strain DSM 114642 / LMG 32736 / 3841) (Rhizobium leguminosarum bv. viciae), this protein is 7-cyano-7-deazaguanine synthase.